Consider the following 209-residue polypeptide: Germin-like protein (209 aa).

The first 18 residues, 1 to 18 (MIVPIFFLFSLLFSSSHG), serve as a signal peptide directing secretion. An intrachain disulfide couples cysteine 24 to cysteine 39. One can recognise a Cupin type-1 domain in the interval 53-199 (SGLGITGNTT…ASFLDPAEIK (147 aa)). An N-linked (GlcNAc...) asparagine glycan is attached at asparagine 60. Residues histidine 101, histidine 103, glutamate 108, and histidine 147 each coordinate Mn(2+).

The protein localises to the secreted. Its subcellular location is the extracellular space. It is found in the apoplast. In terms of biological role, has antibacterial activity against B.subtilis (MIC=5 ug), B.cereus (MIC=50 ug), A.hydrophila (MIC=2.5 ug), S.marcescens(MIC=10 ug), S.enterica (MIC=10 ug), P.entomophila (MIC=2.5 ug) and P.rhodesiae (MIC=10 ug). Has antifungal activity against F.solani KACC 40384 and F.oxysporum KACC 40032. Probably has no oxalate oxidase activity even if the active site is conserved. In Morus alba (White mulberry), this protein is Germin-like protein.